The sequence spans 205 residues: Transcription antitermination protein NusB (205 aa).

The protein belongs to the NusB family.

Functionally, involved in transcription antitermination. Required for transcription of ribosomal RNA (rRNA) genes. Binds specifically to the boxA antiterminator sequence of the ribosomal RNA (rrn) operons. In Acaryochloris marina (strain MBIC 11017), this protein is Transcription antitermination protein NusB.